Reading from the N-terminus, the 297-residue chain is 4-hydroxy-tetrahydrodipicolinate synthase (297 aa).

Pyruvate is bound at residue T50. The active-site Proton donor/acceptor is the Y138. The Schiff-base intermediate with substrate role is filled by K166. Position 208 (I208) interacts with pyruvate.

It belongs to the DapA family. Homotetramer; dimer of dimers.

The protein localises to the cytoplasm. It carries out the reaction L-aspartate 4-semialdehyde + pyruvate = (2S,4S)-4-hydroxy-2,3,4,5-tetrahydrodipicolinate + H2O + H(+). It functions in the pathway amino-acid biosynthesis; L-lysine biosynthesis via DAP pathway; (S)-tetrahydrodipicolinate from L-aspartate: step 3/4. Its function is as follows. Catalyzes the condensation of (S)-aspartate-beta-semialdehyde [(S)-ASA] and pyruvate to 4-hydroxy-tetrahydrodipicolinate (HTPA). This chain is 4-hydroxy-tetrahydrodipicolinate synthase, found in Haemophilus ducreyi (strain 35000HP / ATCC 700724).